The chain runs to 108 residues: Thioredoxin (108 aa).

Positions 2 to 108 (NKIIELTDQN…LKEFLDENIN (107 aa)) constitute a Thioredoxin domain. C32 and C35 are disulfide-bonded.

It belongs to the thioredoxin family.

Its function is as follows. Participates in various redox reactions through the reversible oxidation of its active center dithiol to a disulfide and catalyzes dithiol-disulfide exchange reactions. The chain is Thioredoxin (trxA) from Buchnera aphidicola subsp. Acyrthosiphon pisum (strain APS) (Acyrthosiphon pisum symbiotic bacterium).